A 413-amino-acid chain; its full sequence is NAD-dependent dihydropyrimidine dehydrogenase subunit PreT homolog (413 aa).

Position 287 (glutamate 287) interacts with NAD(+).

Belongs to the NADH dehydrogenase family. As to quaternary structure, heterotetramer of 2 PreA and 2 PreT subunits.

It carries out the reaction 5,6-dihydrouracil + NAD(+) = uracil + NADH + H(+). It catalyses the reaction 5,6-dihydrothymine + NAD(+) = thymine + NADH + H(+). Functionally, involved in pyrimidine base degradation. Catalyzes physiologically the reduction of uracil to 5,6-dihydrouracil (DHU) by using NADH as a specific cosubstrate. It also catalyzes the reverse reaction and the reduction of thymine to 5,6-dihydrothymine (DHT). The sequence is that of NAD-dependent dihydropyrimidine dehydrogenase subunit PreT homolog (preT) from Salmonella typhi.